Consider the following 226-residue polypeptide: DELTA-alicitoxin-Pse1b (226 aa).

The N-terminal stretch at 1–21 is a signal peptide; that stretch reads MRHFVVFLYMFLALSIPTAFA. Residues 22–45 constitute a propeptide that is removed on maturation; sequence KKHIVTKKGNHQDITNDNEGENAE. Residues 50 to 59 are plays an important role in the hemolytic activity; the sequence is TVAGAVIAGG. Positions 58-77 are N-terminal region; it reads GGELALKILTKILYEIGKID. Phosphocholine is bound by residues Ser-101, Val-134, Ser-152, Pro-154, Tyr-180, and Tyr-184. Positions 152–167 are trp-rich region, which is important for the binding to lipid membrane; the sequence is SVPFDYNLYSNWWNVK.

It belongs to the actinoporin family. Sea anemone subfamily. As to quaternary structure, octamer or nonamer in membranes. Monomer in the soluble state.

The protein resides in the secreted. Its subcellular location is the nematocyst. It is found in the target cell membrane. Functionally, pore-forming protein that forms cations-selective hydrophilic pores of around 1 nm and causes cytolysis. Pore formation is a multi-step process that involves specific recognition of membrane sphingomyelin (but neither cholesterol nor phosphatidylcholine) using aromatic rich region and adjacent phosphocholine (POC) binding site, firm binding to the membrane (mainly driven by hydrophobic interactions) accompanied by the transfer of the N-terminal region to the lipid-water interface and finally pore formation after oligomerization of monomers. This chain is DELTA-alicitoxin-Pse1b, found in Phyllodiscus semoni (Night anemone).